The primary structure comprises 597 residues: MTGANSLQRLDWRNLNTLWGSILAETLSRLGCRVAVVCPGSRSAPLTYALAQHPEIEAIPAVDERSAAFFALGLAQQTRQPIPLVCTSGSAGAHFFPALIEAAESGWPLLVLTADRPPELRHCRAGQTIDQVKLYGHYPNWQAELALPSADLEALAYLRQMIIHAWERALYPFPGPVHLNVPLRDPLAPVADGSTAPLVHLQEDPEFEKTFFRGVISPSGLVTPAGGSAFASTASFWREWCGCERGVILAGPAQPADPQRYAEAVARLALALGWPVLAEGLSPLRNYASLNPYLITTYDFLLQGEQPPLWPEQVIQLGSLPTSKALRQTLAQARPRTWLLDPRAQNADPLHNPTTHLPFVVEEVAAGIPAGKAKATAFLQTWLRAEAKARAELDRLLADLPEWFEGKLAWWLAHHLPPETPLFIANSTPVRDVEWFWPPNDRRIRPYFNRGTNGIDGILSTAFGVAYRHRPTVLLTGDLAFLHDCGGLRLAQCLQGSLTILLINNQGGGIFELLPIAEAGPPFEPYFATPQAVDFALLCQAHGIPHRRIETWEELAQALDPLPAQGVRVLEILTDRRADARRRQEWFRRWSELPSTL.

This sequence belongs to the TPP enzyme family. MenD subfamily. As to quaternary structure, homodimer. Mg(2+) is required as a cofactor. It depends on Mn(2+) as a cofactor. Thiamine diphosphate serves as cofactor.

The catalysed reaction is isochorismate + 2-oxoglutarate + H(+) = 5-enolpyruvoyl-6-hydroxy-2-succinyl-cyclohex-3-ene-1-carboxylate + CO2. The protein operates within quinol/quinone metabolism; 1,4-dihydroxy-2-naphthoate biosynthesis; 1,4-dihydroxy-2-naphthoate from chorismate: step 2/7. It functions in the pathway cofactor biosynthesis; phylloquinone biosynthesis. Its function is as follows. Catalyzes the thiamine diphosphate-dependent decarboxylation of 2-oxoglutarate and the subsequent addition of the resulting succinic semialdehyde-thiamine pyrophosphate anion to isochorismate to yield 2-succinyl-5-enolpyruvyl-6-hydroxy-3-cyclohexene-1-carboxylate (SEPHCHC). In Synechococcus sp. (strain JA-3-3Ab) (Cyanobacteria bacterium Yellowstone A-Prime), this protein is 2-succinyl-5-enolpyruvyl-6-hydroxy-3-cyclohexene-1-carboxylate synthase.